The chain runs to 874 residues: Alanine--tRNA ligase (874 aa).

Residues His-563, His-567, Cys-665, and His-669 each coordinate Zn(2+).

Belongs to the class-II aminoacyl-tRNA synthetase family. Zn(2+) is required as a cofactor.

The protein resides in the cytoplasm. It catalyses the reaction tRNA(Ala) + L-alanine + ATP = L-alanyl-tRNA(Ala) + AMP + diphosphate. Functionally, catalyzes the attachment of alanine to tRNA(Ala) in a two-step reaction: alanine is first activated by ATP to form Ala-AMP and then transferred to the acceptor end of tRNA(Ala). Also edits incorrectly charged Ser-tRNA(Ala) and Gly-tRNA(Ala) via its editing domain. This Histophilus somni (strain 2336) (Haemophilus somnus) protein is Alanine--tRNA ligase.